The chain runs to 319 residues: Secreted effector protein sopD2 (319 aa).

Positions 37 to 44 match the Required to target late endocytic compartments motif; that stretch reads WDRFKDCF.

The protein belongs to the SopD family.

It is found in the secreted. The protein localises to the host cell membrane. Functionally, effector proteins function to alter host cell physiology and promote bacterial survival in host tissues. Contributes to the formation of Salmonella-induced filaments (Sifs) in infected epithelial cells and to replication in macrophages. This Salmonella typhimurium (strain LT2 / SGSC1412 / ATCC 700720) protein is Secreted effector protein sopD2 (sopD2).